Consider the following 2179-residue polypeptide: FRAS1-related extracellular matrix protein 1 (2179 aa).

Positions 1–21 (MNSLSWGAANAVLLLLLLAWA) are cleaved as a signal peptide. The Cell attachment site signature appears at 199–201 (RGD). 3 CSPG repeats span residues 296 to 390 (KAAF…LEVY), 413 to 500 (APRV…FRIF), and 521 to 615 (PPFL…FVLW). N-linked (GlcNAc...) asparagine glycosylation is present at asparagine 335. N-linked (GlcNAc...) asparagine glycosylation is found at asparagine 560 and asparagine 622. CSPG repeat units lie at residues 642-754 (KEAP…FSVS), 776-867 (QVPE…LEVT), and 887-982 (EPPV…LVVS). The N-linked (GlcNAc...) asparagine glycan is linked to asparagine 1014. 6 CSPG repeats span residues 1024 to 1126 (PPSI…VYVT), 1147 to 1254 (EAPD…IQLS), 1275 to 1372 (KPML…FYLW), 1393 to 1485 (GDIV…FIIS), 1506 to 1596 (LPVV…FMAT), and 1628 to 1724 (PRIT…FQIM). A glycan (N-linked (GlcNAc...) asparagine) is linked at asparagine 1566. The 100-residue stretch at 1731-1830 (ATPQILELKW…DDEVFEVILN (100 aa)) folds into the Calx-beta domain. A Cell attachment site motif is present at residues 1907–1909 (RGD). A C-type lectin domain is found at 2060 to 2174 (HSGYCHILIT…CRRAKPHNYV (115 aa)). A disulfide bridge connects residues cysteine 2151 and cysteine 2165.

It belongs to the FRAS1 family. As to quaternary structure, interacts with FREM2.

Its subcellular location is the secreted. The protein resides in the extracellular space. It is found in the extracellular matrix. The protein localises to the basement membrane. Its function is as follows. Extracellular matrix protein that plays a role in epidermal differentiation and is required for epidermal adhesion during embryonic development. In Homo sapiens (Human), this protein is FRAS1-related extracellular matrix protein 1.